The primary structure comprises 130 residues: Small ribosomal subunit protein uS8 (130 aa).

This sequence belongs to the universal ribosomal protein uS8 family. In terms of assembly, part of the 30S ribosomal subunit. Contacts proteins S5 and S12.

Its function is as follows. One of the primary rRNA binding proteins, it binds directly to 16S rRNA central domain where it helps coordinate assembly of the platform of the 30S subunit. The protein is Small ribosomal subunit protein uS8 of Salmonella arizonae (strain ATCC BAA-731 / CDC346-86 / RSK2980).